Reading from the N-terminus, the 137-residue chain is Prefoldin subunit alpha (137 aa).

Belongs to the prefoldin subunit alpha family. As to quaternary structure, heterohexamer of two alpha and four beta subunits.

It localises to the cytoplasm. Its function is as follows. Molecular chaperone capable of stabilizing a range of proteins. Seems to fulfill an ATP-independent, HSP70-like function in archaeal de novo protein folding. This is Prefoldin subunit alpha (pfdA) from Archaeoglobus fulgidus (strain ATCC 49558 / DSM 4304 / JCM 9628 / NBRC 100126 / VC-16).